A 954-amino-acid polypeptide reads, in one-letter code: Bifunctional glutamine synthetase adenylyltransferase/adenylyl-removing enzyme (954 aa).

The interval 1–452 (MAVQKDSNKS…HFKATVGGEE (452 aa)) is adenylyl removase. An adenylyl transferase region spans residues 458 to 954 (EHWTAQLWNV…ILAIYQAILE (497 aa)).

This sequence belongs to the GlnE family. Mg(2+) serves as cofactor.

It catalyses the reaction [glutamine synthetase]-O(4)-(5'-adenylyl)-L-tyrosine + phosphate = [glutamine synthetase]-L-tyrosine + ADP. The catalysed reaction is [glutamine synthetase]-L-tyrosine + ATP = [glutamine synthetase]-O(4)-(5'-adenylyl)-L-tyrosine + diphosphate. Functionally, involved in the regulation of glutamine synthetase GlnA, a key enzyme in the process to assimilate ammonia. When cellular nitrogen levels are high, the C-terminal adenylyl transferase (AT) inactivates GlnA by covalent transfer of an adenylyl group from ATP to specific tyrosine residue of GlnA, thus reducing its activity. Conversely, when nitrogen levels are low, the N-terminal adenylyl removase (AR) activates GlnA by removing the adenylyl group by phosphorolysis, increasing its activity. The regulatory region of GlnE binds the signal transduction protein PII (GlnB) which indicates the nitrogen status of the cell. The polypeptide is Bifunctional glutamine synthetase adenylyltransferase/adenylyl-removing enzyme (Shewanella oneidensis (strain ATCC 700550 / JCM 31522 / CIP 106686 / LMG 19005 / NCIMB 14063 / MR-1)).